We begin with the raw amino-acid sequence, 506 residues long: RNA-splicing ligase RtcB homolog (506 aa).

Mn(2+) is bound by residues aspartate 120, cysteine 123, histidine 228, histidine 260, and histidine 354. 227–231 (NHYAE) lines the GMP pocket. Residues 354-355 (HN), 403-406 (GGTM), serine 410, 429-432 (HGAG), and lysine 505 contribute to the GMP site. Histidine 429 serves as the catalytic GMP-histidine intermediate.

It belongs to the RtcB family. In terms of assembly, catalytic component of the tRNA-splicing ligase complex. Mn(2+) serves as cofactor.

It catalyses the reaction a 3'-end 3'-phospho-ribonucleotide-RNA + a 5'-end dephospho-ribonucleoside-RNA + GTP = a ribonucleotidyl-ribonucleotide-RNA + GMP + diphosphate. It carries out the reaction a 3'-end 2',3'-cyclophospho-ribonucleotide-RNA + a 5'-end dephospho-ribonucleoside-RNA + GTP + H2O = a ribonucleotidyl-ribonucleotide-RNA + GMP + diphosphate + H(+). Its function is as follows. Catalytic subunit of the tRNA-splicing ligase complex that acts by directly joining spliced tRNA halves to mature-sized tRNAs by incorporating the precursor-derived splice junction phosphate into the mature tRNA as a canonical 3',5'-phosphodiester. May act as an RNA ligase with broad substrate specificity, and may function toward other RNAs. In Drosophila melanogaster (Fruit fly), this protein is RNA-splicing ligase RtcB homolog.